A 506-amino-acid chain; its full sequence is Light-independent protochlorophyllide reductase subunit B (506 aa).

Asp-36 is a binding site for [4Fe-4S] cluster. Residue Asp-279 is the Proton donor of the active site. 414 to 415 (GL) serves as a coordination point for substrate.

This sequence belongs to the ChlB/BchB/BchZ family. In terms of assembly, protochlorophyllide reductase is composed of three subunits; BchL, BchN and BchB. Forms a heterotetramer of two BchB and two BchN subunits. It depends on [4Fe-4S] cluster as a cofactor.

The catalysed reaction is chlorophyllide a + oxidized 2[4Fe-4S]-[ferredoxin] + 2 ADP + 2 phosphate = protochlorophyllide a + reduced 2[4Fe-4S]-[ferredoxin] + 2 ATP + 2 H2O. It functions in the pathway porphyrin-containing compound metabolism; bacteriochlorophyll biosynthesis (light-independent). In terms of biological role, component of the dark-operative protochlorophyllide reductase (DPOR) that uses Mg-ATP and reduced ferredoxin to reduce ring D of protochlorophyllide (Pchlide) to form chlorophyllide a (Chlide). This reaction is light-independent. The NB-protein (BchN-BchB) is the catalytic component of the complex. This Methylobacterium sp. (strain 4-46) protein is Light-independent protochlorophyllide reductase subunit B.